Reading from the N-terminus, the 380-residue chain is Lipid-A-disaccharide synthase (380 aa).

It belongs to the LpxB family.

The enzyme catalyses a lipid X + a UDP-2-N,3-O-bis[(3R)-3-hydroxyacyl]-alpha-D-glucosamine = a lipid A disaccharide + UDP + H(+). Its pathway is bacterial outer membrane biogenesis; LPS lipid A biosynthesis. Functionally, condensation of UDP-2,3-diacylglucosamine and 2,3-diacylglucosamine-1-phosphate to form lipid A disaccharide, a precursor of lipid A, a phosphorylated glycolipid that anchors the lipopolysaccharide to the outer membrane of the cell. This Rickettsia typhi (strain ATCC VR-144 / Wilmington) protein is Lipid-A-disaccharide synthase.